The following is a 705-amino-acid chain: Ribosomal RNA large subunit methyltransferase K/L (705 aa).

Positions 43-154 (VVYRCCLWSR…GEKGILGFDL (112 aa)) constitute a THUMP domain.

It belongs to the methyltransferase superfamily. RlmKL family.

It is found in the cytoplasm. It carries out the reaction guanosine(2445) in 23S rRNA + S-adenosyl-L-methionine = N(2)-methylguanosine(2445) in 23S rRNA + S-adenosyl-L-homocysteine + H(+). The catalysed reaction is guanosine(2069) in 23S rRNA + S-adenosyl-L-methionine = N(2)-methylguanosine(2069) in 23S rRNA + S-adenosyl-L-homocysteine + H(+). Functionally, specifically methylates the guanine in position 2445 (m2G2445) and the guanine in position 2069 (m7G2069) of 23S rRNA. This is Ribosomal RNA large subunit methyltransferase K/L from Aliivibrio fischeri (strain ATCC 700601 / ES114) (Vibrio fischeri).